Consider the following 283-residue polypeptide: Formamidopyrimidine-DNA glycosylase (283 aa).

The active-site Schiff-base intermediate with DNA is the P2. The active-site Proton donor is E3. The Proton donor; for beta-elimination activity role is filled by K58. 3 residues coordinate DNA: H100, R119, and R162. Residues 247 to 283 (DVYGREGEPCRRAGCDGTVQRITQSGRSSFYCAQCQR) form an FPG-type zinc finger. The active-site Proton donor; for delta-elimination activity is the R273.

The protein belongs to the FPG family. Monomer. Zn(2+) serves as cofactor.

The enzyme catalyses Hydrolysis of DNA containing ring-opened 7-methylguanine residues, releasing 2,6-diamino-4-hydroxy-5-(N-methyl)formamidopyrimidine.. It carries out the reaction 2'-deoxyribonucleotide-(2'-deoxyribose 5'-phosphate)-2'-deoxyribonucleotide-DNA = a 3'-end 2'-deoxyribonucleotide-(2,3-dehydro-2,3-deoxyribose 5'-phosphate)-DNA + a 5'-end 5'-phospho-2'-deoxyribonucleoside-DNA + H(+). Involved in base excision repair of DNA damaged by oxidation or by mutagenic agents. Acts as a DNA glycosylase that recognizes and removes damaged bases. Has a preference for oxidized purines, such as 7,8-dihydro-8-oxoguanine (8-oxoG). Has AP (apurinic/apyrimidinic) lyase activity and introduces nicks in the DNA strand. Cleaves the DNA backbone by beta-delta elimination to generate a single-strand break at the site of the removed base with both 3'- and 5'-phosphates. In Ruegeria pomeroyi (strain ATCC 700808 / DSM 15171 / DSS-3) (Silicibacter pomeroyi), this protein is Formamidopyrimidine-DNA glycosylase.